The primary structure comprises 72 residues: Keratin-associated protein 19-5 (72 aa).

This sequence belongs to the KRTAP type 19 family. Interacts with hair keratins.

In the hair cortex, hair keratin intermediate filaments are embedded in an interfilamentous matrix, consisting of hair keratin-associated proteins (KRTAP), which are essential for the formation of a rigid and resistant hair shaft through their extensive disulfide bond cross-linking with abundant cysteine residues of hair keratins. The matrix proteins include the high-sulfur and high-glycine-tyrosine keratins. This is Keratin-associated protein 19-5 (KRTAP19-5) from Homo sapiens (Human).